A 196-amino-acid chain; its full sequence is Glycerol-3-phosphate acyltransferase (196 aa).

The next 4 membrane-spanning stretches (helical) occupy residues 5–25, 70–90, 111–131, and 152–172; these read GLIA…MILT, VVIA…LGAF, IGVL…IWLL, and LLLW…LTVL.

It belongs to the PlsY family. In terms of assembly, probably interacts with PlsX.

It localises to the cell inner membrane. The enzyme catalyses an acyl phosphate + sn-glycerol 3-phosphate = a 1-acyl-sn-glycero-3-phosphate + phosphate. The protein operates within lipid metabolism; phospholipid metabolism. Functionally, catalyzes the transfer of an acyl group from acyl-phosphate (acyl-PO(4)) to glycerol-3-phosphate (G3P) to form lysophosphatidic acid (LPA). This enzyme utilizes acyl-phosphate as fatty acyl donor, but not acyl-CoA or acyl-ACP. The chain is Glycerol-3-phosphate acyltransferase from Nitrobacter winogradskyi (strain ATCC 25391 / DSM 10237 / CIP 104748 / NCIMB 11846 / Nb-255).